The chain runs to 351 residues: MKVCIIGASGFVGGELLRILLQHSGVEVVCATSRRFKGEYVYRVHPNLRGFTQLKFVEPSIDAALKADVVFLALPHGESVKWVPKLYESGVAVFDLSADFRLKDPNAYVEWYKWPQPHPYPDLLQKAVYGQPELHRSELVGAKLVAVPGCMATASILMLAPLAKHGLLGETPPVIDAKIGSSGAGAEGSVVDLHSFRTYVVRPYEPVHHRHIAEIEQELSLLAGKRVKVAFTPHAVDMVRGIFATGHVFVEKMPTEADMWKMYRSMYGDSKFIRIVKDRLGISRYPNVKYVLGSNFVDIGFELDQRLNRLVTFSAIDNLVRGAAGQAVQAFNVAMGFPEDEGLRYIPLAPV.

NADP(+) is bound by residues 9–12 and 33–35; these read SGFV and SRR. Cys-150 is an active-site residue. Asn-318 contributes to the NADP(+) binding site.

This sequence belongs to the NAGSA dehydrogenase family. Type 1 subfamily. LysY sub-subfamily.

The protein resides in the cytoplasm. It carries out the reaction [amino-group carrier protein]-C-terminal-N-(1-carboxy-5-oxopentan-1-yl)-L-glutamine + phosphate + NADP(+) = [amino-group carrier protein]-C-terminal-N-(1-carboxy-5-phosphooxy-5-oxopentan-1-yl)-L-glutamine + NADPH + H(+). It catalyses the reaction [amino-group carrier protein]-C-terminal-gamma-(L-glutamyl-5-semialdehyde)-L-glutamate + phosphate + NADP(+) = [amino-group carrier protein]-C-terminal-gamma-(5-phospho-L-glutamyl)-L-glutamate + NADPH + H(+). It participates in amino-acid biosynthesis; L-lysine biosynthesis via AAA pathway; L-lysine from L-alpha-aminoadipate (Thermus route): step 3/5. Its pathway is amino-acid biosynthesis; L-arginine biosynthesis. Involved in both the arginine and lysine biosynthetic pathways. In Pyrobaculum aerophilum (strain ATCC 51768 / DSM 7523 / JCM 9630 / CIP 104966 / NBRC 100827 / IM2), this protein is Putative [LysW]-L-2-aminoadipate/[LysW]-L-glutamate phosphate reductase.